Here is a 184-residue protein sequence, read N- to C-terminus: ATP synthase subunit b, chloroplastic (184 aa).

A helical transmembrane segment spans residues Leu27–Leu49.

This sequence belongs to the ATPase B chain family. F-type ATPases have 2 components, F(1) - the catalytic core - and F(0) - the membrane proton channel. F(1) has five subunits: alpha(3), beta(3), gamma(1), delta(1), epsilon(1). F(0) has four main subunits: a(1), b(1), b'(1) and c(10-14). The alpha and beta chains form an alternating ring which encloses part of the gamma chain. F(1) is attached to F(0) by a central stalk formed by the gamma and epsilon chains, while a peripheral stalk is formed by the delta, b and b' chains.

It localises to the plastid. The protein resides in the chloroplast thylakoid membrane. In terms of biological role, f(1)F(0) ATP synthase produces ATP from ADP in the presence of a proton or sodium gradient. F-type ATPases consist of two structural domains, F(1) containing the extramembraneous catalytic core and F(0) containing the membrane proton channel, linked together by a central stalk and a peripheral stalk. During catalysis, ATP synthesis in the catalytic domain of F(1) is coupled via a rotary mechanism of the central stalk subunits to proton translocation. Functionally, component of the F(0) channel, it forms part of the peripheral stalk, linking F(1) to F(0). The chain is ATP synthase subunit b, chloroplastic from Liriodendron tulipifera (Tuliptree).